We begin with the raw amino-acid sequence, 445 residues long: AVMGRNLALNIESRGYTVSVFNRSREKTEEVIAENPGKKLVPHYTVKEFVESLETPRRILLMVKAGAGTDSAIDSLKPYLDKGDIIIDGGNTFFQDTIRRNRELSADGFNFIGTGVSGGEEGALKGPSIMPGGQKEAYELVAPILEQIAARAEDGEPCVAYIGADGAGHYVKMVHNGIEYGDMQLIAEAYALLKGGLALSNEELATTFTEWNQGELSSYLIDITKDIFTKKDEEGKYLVDVILDEAANKGTGKWTSQSSLDLGEPLSLITESVFARYISSLKDQRVAASKVLTGPQAQPASDKAEFIEKVRRALYLGKIVSYAQGFSQLRAASNEYSWDLNYGEIAKIFRAGCIIRAQFLQKITDAYEENAGIANLLLAPYFKQIADEYQQALRDVVAYAVQNGIPVPTFSAAIAYYDSYRSAVLPANLIQAQRDYFGAHTYKRT.

Residues A1–G4, N22–S24, V63–A65, and N91 each bind NADP(+). Residues N91 and S117–G119 contribute to the substrate site. The active-site Proton acceptor is K172. H175–N176 lines the substrate pocket. E179 (proton donor) is an active-site residue. Substrate is bound by residues Y180, K249, R276, R434, and H440.

The protein belongs to the 6-phosphogluconate dehydrogenase family. Homodimer.

The enzyme catalyses 6-phospho-D-gluconate + NADP(+) = D-ribulose 5-phosphate + CO2 + NADPH. The protein operates within carbohydrate degradation; pentose phosphate pathway; D-ribulose 5-phosphate from D-glucose 6-phosphate (oxidative stage): step 3/3. Its function is as follows. Catalyzes the oxidative decarboxylation of 6-phosphogluconate to ribulose 5-phosphate and CO(2), with concomitant reduction of NADP to NADPH. The protein is 6-phosphogluconate dehydrogenase, decarboxylating (gnd) of Raoultella terrigena (Klebsiella terrigena).